The chain runs to 244 residues: DNA polymerase sliding clamp (244 aa).

The protein belongs to the PCNA family. In terms of assembly, homotrimer. The subunits circularize to form a toroid; DNA passes through its center. Replication factor C (RFC) is required to load the toroid on the DNA.

Sliding clamp subunit that acts as a moving platform for DNA processing. Responsible for tethering the catalytic subunit of DNA polymerase and other proteins to DNA during high-speed replication. This chain is DNA polymerase sliding clamp, found in Methanothrix thermoacetophila (strain DSM 6194 / JCM 14653 / NBRC 101360 / PT) (Methanosaeta thermophila).